An 816-amino-acid polypeptide reads, in one-letter code: Phosphatidylinositol 4-kinase beta (816 aa).

Disordered regions lie at residues 1 to 30, 101 to 120, and 248 to 318; these read MGDTVVEPAPLKPTSEPTSGPPGNNGGSLL, EDEMGATVASGTAKGARRRR, and AHRK…SFSS. Residue Gly2 is modified to N-acetylglycine. The segment at 2–68 is interaction with ACBD3; it reads GDTVVEPAPL…VKLLHGGMAV (67 aa). The PIK helical domain maps to 52–242; the sequence is CQDVLEKVKL…GTKLRKLILS (191 aa). The residue at position 258 (Ser258) is a Phosphoserine. At Thr263 the chain carries Phosphothreonine. Phosphoserine occurs at positions 266, 275, 277, 284, and 294. Composition is skewed to polar residues over residues 278–297 and 306–318; these read DATASISLSSNLKRTASNPK and SSSTESIDNSFSS. Residue Ser428 is modified to Phosphoserine. Thr438 carries the phosphothreonine modification. Ser511 is subject to Phosphoserine. Phosphothreonine is present on residues Thr517 and Thr519. One can recognise a PI3K/PI4K catalytic domain in the interval 535 to 801; the sequence is EPWQEKVRRI…MVDGSMRSIT (267 aa). Residues 541–547 form a G-loop region; it reads VRRIREG. A catalytic loop region spans residues 668–676; that stretch reads QVKDRHNGN. Positions 687-711 are activation loop; it reads HIDFGFILSSSPRNLGFETSAFKLT.

This sequence belongs to the PI3/PI4-kinase family. Type III PI4K subfamily. As to quaternary structure, interacts with ARF1 and ARF3 in the Golgi complex, but not with ARF4, ARF5 or ARF6. Interacts with NCS1/FREQ in a calcium-independent manner. Interacts with CALN1/CABP8 and CALN2/CABP7; in a calcium-dependent manner; this interaction competes with NCS1/FREQ binding. Interacts with ACBD3. Interacts with ARMH3, YWHAB, YWHAE, YWHAG, YWHAH, YWHAQ, YWHAZ and SFN. Interacts with GGA2 (via VHS domain); the interaction is important for PI4KB location at the Golgi apparatus membrane. Interacts with ATG9A. Mg(2+) serves as cofactor. Requires Mn(2+) as cofactor.

It localises to the endomembrane system. The protein localises to the mitochondrion outer membrane. The protein resides in the rough endoplasmic reticulum membrane. It is found in the golgi apparatus. Its subcellular location is the golgi apparatus membrane. The catalysed reaction is a 1,2-diacyl-sn-glycero-3-phospho-(1D-myo-inositol) + ATP = a 1,2-diacyl-sn-glycero-3-phospho-(1D-myo-inositol 4-phosphate) + ADP + H(+). With respect to regulation, inhibited by wortmannin. Increased kinase activity upon interaction with NCS1/FREQ. Functionally, phosphorylates phosphatidylinositol (PI) in the first committed step in the production of the second messenger inositol-1,4,5,-trisphosphate (PIP). May regulate Golgi disintegration/reorganization during mitosis, possibly via its phosphorylation. Involved in Golgi-to-plasma membrane trafficking. The protein is Phosphatidylinositol 4-kinase beta (PI4KB) of Plecturocebus moloch (Dusky titi monkey).